We begin with the raw amino-acid sequence, 314 residues long: Olfactory receptor 11H7 (314 aa).

The Extracellular portion of the chain corresponds to 1–24 (MNNSQISTVTQFVLLGFPGPWKIQ). A glycan (N-linked (GlcNAc...) asparagine) is linked at Asn-2. The chain crosses the membrane as a helical span at residues 25–45 (IIFFSMILLVYIFTLTGNMAI). Residues 46–57 (ICAVRWDHRLHT) are Cytoplasmic-facing. The helical transmembrane segment at 58-78 (PMYVLLANFSFLEIWYVTCTV) threads the bilayer. Topologically, residues 79–97 (PNMLVNFFSKTKTISFSGC) are extracellular. Residues Cys-97 and Cys-179 are joined by a disulfide bond. A helical membrane pass occupies residues 98 to 118 (FTQFHFFFSLGTTECFFLCVM). At 119-142 (AYDRYLAICHPLHYPSIMTGQLCG) the chain is on the cytoplasmic side. The helical transmembrane segment at 143-163 (ILVSLCWLIGFLGHSISIFFI) threads the bilayer. The Extracellular portion of the chain corresponds to 164–201 (FQLPFCGPNIIDHFLCDVDPLMALSSAPTHIIGHVFHS). The chain crosses the membrane as a helical span at residues 202–222 (VSSLFINLTMVYILGSYTLVL). The Cytoplasmic segment spans residues 223 to 244 (RTVLQVPSSAGWQKAISTCGSH). A helical transmembrane segment spans residues 245-265 (LVVVSLFYGAIMLMYVSPTPG). Residues 266–271 (NSVAMH) are Extracellular-facing. Residues 272-292 (KLITLIYSVVTPVLNPLIYSL) traverse the membrane as a helical segment. Residues 293–314 (RNKDMKYALHHVFCGMRIIQRS) are Cytoplasmic-facing.

It belongs to the G-protein coupled receptor 1 family.

The protein localises to the cell membrane. In terms of biological role, odorant receptor. Activated by isovaleric acid. This chain is Olfactory receptor 11H7 (OR11H7), found in Homo sapiens (Human).